A 207-amino-acid chain; its full sequence is Large ribosomal subunit protein uL4 (207 aa).

The disordered stretch occupies residues 54–74 (RSDVRGGGKKPYRQKGTGNAR).

Belongs to the universal ribosomal protein uL4 family. As to quaternary structure, part of the 50S ribosomal subunit.

Its function is as follows. One of the primary rRNA binding proteins, this protein initially binds near the 5'-end of the 23S rRNA. It is important during the early stages of 50S assembly. It makes multiple contacts with different domains of the 23S rRNA in the assembled 50S subunit and ribosome. Functionally, forms part of the polypeptide exit tunnel. The chain is Large ribosomal subunit protein uL4 from Magnetococcus marinus (strain ATCC BAA-1437 / JCM 17883 / MC-1).